Consider the following 766-residue polypeptide: General transcription and DNA repair factor IIH helicase/translocase subunit XPB2 (766 aa).

The disordered stretch occupies residues 1–56 (MGNDERKRPTKKMKYGGKDDQKMKNIQNVEDYYDDADEDSRDGEGEEKRRDFTDLE). Acidic residues predominate over residues 31–41 (DYYDDADEDSR). A compositionally biased stretch (basic and acidic residues) spans 42–56 (DGEGEEKRRDFTDLE). The Helicase ATP-binding domain maps to 293–455 (MFGNGRARSG…DLNFLIGPKL (163 aa)). 306 to 313 (LPCGAGKS) provides a ligand contact to ATP. A DEVH box motif is present at residues 408 to 411 (DEVH). The Helicase C-terminal domain maps to 510-676 (RACEFLIRFH…SLPPPDAGSS (167 aa)). Polar residues predominate over residues 739-748 (SGRQKSGNQS). A disordered region spans residues 739 to 766 (SGRQKSGNQSKKPKDPTKRHNIFKKRYV). Residues 749-765 (KKPKDPTKRHNIFKKRY) carry the Nuclear localization signal motif. Positions 757–766 (RHNIFKKRYV) are enriched in basic residues.

This sequence belongs to the helicase family. RAD25/XPB subfamily. As to quaternary structure, component of the 7-subunit TFIIH core complex composed of XPB, XPD, TFB1/GTF2H1, GTF2H2/P44, TFB4/GTF2H3, TFB2/GTF2H4 and TFB5/GTF2H5, which is active in NER. The core complex associates with the 3-subunit CDK-activating kinase (CAK) module composed of CYCH1/cyclin H1, CDKD and MAT1/At4g30820 to form the 10-subunit holoenzyme (holo-TFIIH) active in transcription. Expressed ubiquitously.

It localises to the nucleus. The catalysed reaction is Couples ATP hydrolysis with the unwinding of duplex DNA by translocating in the 3'-5' direction.. It catalyses the reaction ATP + H2O = ADP + phosphate + H(+). Functionally, ATP-dependent 3'-5' DNA helicase/translocase; binds dsDNA rather than ssDNA, unzipping it in a translocase rather than classical helicase activity. Component of the general transcription and DNA repair factor IIH (TFIIH) core complex. When complexed to CDK-activating kinase (CAK), involved in RNA transcription by RNA polymerase II. The ATPase activity of XPB/ERCC3, but not its helicase activity, is required for DNA opening; it may wrap around the damaged DNA wedging it open, causing localized melting and twisting that allows XPD/ERCC2 helicase to anchor. The ATP-dependent helicase activity of XPB/ERCC3 may be required for promoter escape. Also involved in transcription-coupled nucleotide excision repair (NER) of damaged DNA. In NER, TFIIH acts by opening DNA around the lesion to allow the excision of the damaged oligonucleotide and its replacement by a new DNA fragment. The structure of the TFIIH transcription complex differs from the NER-TFIIH complex. Partially complements UV sensitivity of a yeast SSL2 mutation. This Arabidopsis thaliana (Mouse-ear cress) protein is General transcription and DNA repair factor IIH helicase/translocase subunit XPB2 (XPB2).